A 371-amino-acid polypeptide reads, in one-letter code: Chaperone protein DnaJ (371 aa).

In terms of domain architecture, J spans 5-69 (EFYDRLGVSK…QKRAAYDQYG (65 aa)). A CR-type zinc finger spans residues 127-209 (GAEKEVSYNR…CHGTGHEKKT (83 aa)). Cysteine 140, cysteine 143, cysteine 157, cysteine 160, cysteine 183, cysteine 186, cysteine 197, and cysteine 200 together coordinate Zn(2+). CXXCXGXG motif repeat units lie at residues 140 to 147 (CHTCSGSG), 157 to 164 (CQKCHGSG), 183 to 190 (CDVCQGSG), and 197 to 204 (CPTCHGTG).

Belongs to the DnaJ family. As to quaternary structure, homodimer. Requires Zn(2+) as cofactor.

It localises to the cytoplasm. Participates actively in the response to hyperosmotic and heat shock by preventing the aggregation of stress-denatured proteins and by disaggregating proteins, also in an autonomous, DnaK-independent fashion. Unfolded proteins bind initially to DnaJ; upon interaction with the DnaJ-bound protein, DnaK hydrolyzes its bound ATP, resulting in the formation of a stable complex. GrpE releases ADP from DnaK; ATP binding to DnaK triggers the release of the substrate protein, thus completing the reaction cycle. Several rounds of ATP-dependent interactions between DnaJ, DnaK and GrpE are required for fully efficient folding. Also involved, together with DnaK and GrpE, in the DNA replication of plasmids through activation of initiation proteins. This is Chaperone protein DnaJ from Streptococcus agalactiae serotype Ia (strain ATCC 27591 / A909 / CDC SS700).